The sequence spans 122 residues: Basic phospholipase A2 (122 aa).

Cystine bridges form between C26–C115, C28–C44, C43–C95, C49–C122, C50–C88, C57–C81, and C75–C86. Residues Y27, G29, and G31 each contribute to the Ca(2+) site. H47 is an active-site residue. D48 lines the Ca(2+) pocket. D89 is an active-site residue.

Belongs to the phospholipase A2 family. Group II subfamily. D49 sub-subfamily. It depends on Ca(2+) as a cofactor. In terms of tissue distribution, expressed by the venom gland.

It is found in the secreted. It carries out the reaction a 1,2-diacyl-sn-glycero-3-phosphocholine + H2O = a 1-acyl-sn-glycero-3-phosphocholine + a fatty acid + H(+). Snake venom phospholipase A2 (PLA2) that does not inhibit platelet aggregation. Exhibits cytotoxic and anticoagulant activity. Induces Ehrlich tumor growth but not angiogenesis. PLA2 catalyzes the calcium-dependent hydrolysis of the 2-acyl groups in 3-sn-phosphoglycerides. The sequence is that of Basic phospholipase A2 from Bothrops leucurus (Whitetail lancehead).